Here is a 308-residue protein sequence, read N- to C-terminus: uncharacterized protein (308 aa).

This is an uncharacterized protein from Bos taurus (Bovine).